The chain runs to 134 residues: Phosphoribosyl-AMP cyclohydrolase (134 aa).

Residue aspartate 80 coordinates Mg(2+). Cysteine 81 contributes to the Zn(2+) binding site. Positions 82 and 84 each coordinate Mg(2+). Residues cysteine 98 and cysteine 105 each coordinate Zn(2+).

It belongs to the PRA-CH family. As to quaternary structure, homodimer. It depends on Mg(2+) as a cofactor. Requires Zn(2+) as cofactor.

Its subcellular location is the cytoplasm. It catalyses the reaction 1-(5-phospho-beta-D-ribosyl)-5'-AMP + H2O = 1-(5-phospho-beta-D-ribosyl)-5-[(5-phospho-beta-D-ribosylamino)methylideneamino]imidazole-4-carboxamide. Its pathway is amino-acid biosynthesis; L-histidine biosynthesis; L-histidine from 5-phospho-alpha-D-ribose 1-diphosphate: step 3/9. In terms of biological role, catalyzes the hydrolysis of the adenine ring of phosphoribosyl-AMP. This Bordetella petrii (strain ATCC BAA-461 / DSM 12804 / CCUG 43448) protein is Phosphoribosyl-AMP cyclohydrolase.